The following is a 624-amino-acid chain: Probable pectinesterase/pectinesterase inhibitor 47 (624 aa).

An N-terminal signal peptide occupies residues 1–19; sequence MQTHSSSLVFLALLCLSWA. The tract at residues 24–88 is disordered; it reads PTRPPSQPPS…PSPLPPNIAC (65 aa). Pro residues predominate over residues 25 to 84; it reads TRPPSQPPSHPPIQPSSQPPTQPPSQPPTQPPTQPPSHPPTQPPTPPPSQSPSQPSPLPP. The interval 74-236 is pectinesterase inhibitor 47; sequence QSPSQPSPLP…TRLYSVSLGL (163 aa). Asn-225, Asn-330, Asn-369, and Asn-376 each carry an N-linked (GlcNAc...) asparagine glycan. The interval 307–606 is pectinesterase 47; that stretch reads AVTVGPYETD…FTVYNFTLGD (300 aa). Substrate is bound at residue Thr-385. Asn-387 carries an N-linked (GlcNAc...) asparagine glycan. Gln-415 is a substrate binding site. Asp-438 functions as the Proton donor; for pectinesterase activity in the catalytic mechanism. Cysteines 452 and 472 form a disulfide. Asp-459 acts as the Nucleophile; for pectinesterase activity in catalysis. An N-linked (GlcNAc...) asparagine glycan is attached at Asn-505. Substrate is bound by residues Arg-527 and Trp-529. N-linked (GlcNAc...) asparagine glycosylation is found at Asn-555, Asn-596, and Asn-601.

In the N-terminal section; belongs to the PMEI family. It in the C-terminal section; belongs to the pectinesterase family.

It is found in the secreted. The protein localises to the cell wall. It carries out the reaction [(1-&gt;4)-alpha-D-galacturonosyl methyl ester](n) + n H2O = [(1-&gt;4)-alpha-D-galacturonosyl](n) + n methanol + n H(+). Its pathway is glycan metabolism; pectin degradation; 2-dehydro-3-deoxy-D-gluconate from pectin: step 1/5. Functionally, acts in the modification of cell walls via demethylesterification of cell wall pectin. The chain is Probable pectinesterase/pectinesterase inhibitor 47 (PME47) from Arabidopsis thaliana (Mouse-ear cress).